Here is a 273-residue protein sequence, read N- to C-terminus: Dermonecrotic toxin LdSicTox-alphaIB3ai (273 aa).

Residue H5 is part of the active site. Mg(2+) is bound by residues E25 and D27. The Nucleophile role is filled by H41. 2 disulfides stabilise this stretch: C45/C51 and C47/C190. D85 contacts Mg(2+).

It belongs to the arthropod phospholipase D family. Class II subfamily. Requires Mg(2+) as cofactor. As to expression, expressed by the venom gland.

It is found in the secreted. The catalysed reaction is an N-(acyl)-sphingosylphosphocholine = an N-(acyl)-sphingosyl-1,3-cyclic phosphate + choline. It carries out the reaction an N-(acyl)-sphingosylphosphoethanolamine = an N-(acyl)-sphingosyl-1,3-cyclic phosphate + ethanolamine. The enzyme catalyses a 1-acyl-sn-glycero-3-phosphocholine = a 1-acyl-sn-glycero-2,3-cyclic phosphate + choline. It catalyses the reaction a 1-acyl-sn-glycero-3-phosphoethanolamine = a 1-acyl-sn-glycero-2,3-cyclic phosphate + ethanolamine. In terms of biological role, dermonecrotic toxins cleave the phosphodiester linkage between the phosphate and headgroup of certain phospholipids (sphingolipid and lysolipid substrates), forming an alcohol (often choline) and a cyclic phosphate. This toxin acts on sphingomyelin (SM). It may also act on ceramide phosphoethanolamine (CPE), lysophosphatidylcholine (LPC) and lysophosphatidylethanolamine (LPE), but not on lysophosphatidylserine (LPS), and lysophosphatidylglycerol (LPG). It acts by transphosphatidylation, releasing exclusively cyclic phosphate products as second products. Induces dermonecrosis, hemolysis, increased vascular permeability, edema, inflammatory response, and platelet aggregation. The polypeptide is Dermonecrotic toxin LdSicTox-alphaIB3ai (Loxosceles deserta (Desert recluse spider)).